We begin with the raw amino-acid sequence, 319 residues long: Ribosomal RNA small subunit methyltransferase H (319 aa).

Residues 37–39, aspartate 56, leucine 90, aspartate 104, and glutamine 111 contribute to the S-adenosyl-L-methionine site; that span reads GGH.

This sequence belongs to the methyltransferase superfamily. RsmH family.

Its subcellular location is the cytoplasm. The enzyme catalyses cytidine(1402) in 16S rRNA + S-adenosyl-L-methionine = N(4)-methylcytidine(1402) in 16S rRNA + S-adenosyl-L-homocysteine + H(+). Functionally, specifically methylates the N4 position of cytidine in position 1402 (C1402) of 16S rRNA. The sequence is that of Ribosomal RNA small subunit methyltransferase H from Nocardioides sp. (strain ATCC BAA-499 / JS614).